Consider the following 199-residue polypeptide: Dephospho-CoA kinase (199 aa).

A DPCK domain is found at 3 to 199 (VIGLTGSIGM…AAAKMPRRRS (197 aa)). 11 to 16 (GMGKST) serves as a coordination point for ATP.

This sequence belongs to the CoaE family.

It localises to the cytoplasm. The enzyme catalyses 3'-dephospho-CoA + ATP = ADP + CoA + H(+). Its pathway is cofactor biosynthesis; coenzyme A biosynthesis; CoA from (R)-pantothenate: step 5/5. In terms of biological role, catalyzes the phosphorylation of the 3'-hydroxyl group of dephosphocoenzyme A to form coenzyme A. This chain is Dephospho-CoA kinase, found in Nitrobacter winogradskyi (strain ATCC 25391 / DSM 10237 / CIP 104748 / NCIMB 11846 / Nb-255).